Here is a 384-residue protein sequence, read N- to C-terminus: Chaperone protein DnaJ 1 (384 aa).

One can recognise a J domain in the interval 4-68 (DYYGLLGVAR…EKRRIVDMGG (65 aa)). The CR-type zinc-finger motif lies at 133–215 (GVTKHLTVDT…CGGDGRVRAR (83 aa)). Cys146, Cys149, Cys163, Cys166, Cys189, Cys192, Cys203, and Cys206 together coordinate Zn(2+). CXXCXGXG motif repeat units lie at residues 146-153 (CDACHGSG), 163-170 (CETCGGAG), 189-196 (CPTCRGAG), and 203-210 (CHKCGGDG).

Belongs to the DnaJ family. As to quaternary structure, homodimer. It depends on Zn(2+) as a cofactor.

It localises to the cytoplasm. Participates actively in the response to hyperosmotic and heat shock by preventing the aggregation of stress-denatured proteins and by disaggregating proteins, also in an autonomous, DnaK-independent fashion. Unfolded proteins bind initially to DnaJ; upon interaction with the DnaJ-bound protein, DnaK hydrolyzes its bound ATP, resulting in the formation of a stable complex. GrpE releases ADP from DnaK; ATP binding to DnaK triggers the release of the substrate protein, thus completing the reaction cycle. Several rounds of ATP-dependent interactions between DnaJ, DnaK and GrpE are required for fully efficient folding. Also involved, together with DnaK and GrpE, in the DNA replication of plasmids through activation of initiation proteins. The sequence is that of Chaperone protein DnaJ 1 from Nocardia farcinica (strain IFM 10152).